The primary structure comprises 151 residues: MKRRKAREYVLQFLYACEMNENTQKICNYNFLQEEIEKFWERNYEEQNSDIKSFANQLIEGTIEHIDIIDKIIQKYADKWNIERMITIDKNILRFSIYEILYRQDIPYQVTINEAVEIAKKYSTKESAAFINGILDRIAKEEICHNKSAEK.

It belongs to the NusB family.

In terms of biological role, involved in transcription antitermination. Required for transcription of ribosomal RNA (rRNA) genes. Binds specifically to the boxA antiterminator sequence of the ribosomal RNA (rrn) operons. In Thermodesulfovibrio yellowstonii (strain ATCC 51303 / DSM 11347 / YP87), this protein is Transcription antitermination protein NusB.